The sequence spans 372 residues: NAD(P)H-quinone oxidoreductase subunit 1 (372 aa).

8 helical membrane-spanning segments follow: residues Ile-27–Val-47, Ile-97–Val-117, Val-128–Met-148, Leu-176–Val-196, Ile-204–Leu-224, Ile-266–Val-286, Ser-308–Leu-328, and Phe-347–Pro-367.

It belongs to the complex I subunit 1 family. NDH-1 is composed of at least 11 different subunits.

It localises to the cellular thylakoid membrane. It catalyses the reaction a plastoquinone + NADH + (n+1) H(+)(in) = a plastoquinol + NAD(+) + n H(+)(out). The catalysed reaction is a plastoquinone + NADPH + (n+1) H(+)(in) = a plastoquinol + NADP(+) + n H(+)(out). Functionally, NDH-1 shuttles electrons from an unknown electron donor, via FMN and iron-sulfur (Fe-S) centers, to quinones in the respiratory and/or the photosynthetic chain. The immediate electron acceptor for the enzyme in this species is believed to be plastoquinone. Couples the redox reaction to proton translocation, and thus conserves the redox energy in a proton gradient. This chain is NAD(P)H-quinone oxidoreductase subunit 1, found in Prochlorococcus marinus (strain AS9601).